We begin with the raw amino-acid sequence, 354 residues long: Guanine nucleotide-binding protein G(o) subunit alpha (354 aa).

Glycine 2 carries N-myristoyl glycine lipidation. A lipid anchor (S-palmitoyl cysteine) is attached at cysteine 3. One can recognise a G-alpha domain in the interval 32–354 (KDVKLLLLGA…ANNLRGCGLY (323 aa)). The G1 motif stretch occupies residues 35–48 (KLLLLGAGESGKST). Residues glutamate 43, lysine 46, serine 47, threonine 48, serine 152, leucine 176, arginine 177, threonine 178, and arginine 179 each coordinate GTP. Serine 47 contributes to the Mg(2+) binding site. The segment at 174–182 (DILRTRVKT) is G2 motif. Threonine 182 is a binding site for Mg(2+). The interval 197 to 206 (FRLFDVGGQR) is G3 motif. Glutamine 205 bears the 5-glutamyl histamine mark. Residues 266–273 (ILFLNKKD) form a G4 motif region. 3 residues coordinate GTP: asparagine 270, aspartate 273, and cysteine 325. The interval 324-329 (TCATDT) is G5 motif. At asparagine 346 the chain carries Deamidated asparagine; in form Alpha-3. Cysteine 351 carries S-palmitoyl cysteine lipidation.

It belongs to the G-alpha family. G(i/o/t/z) subfamily. As to quaternary structure, g proteins are composed of 3 units; alpha, beta and gamma. The alpha chain contains the guanine nucleotide binding site. Forms a complex with GNB1 and GNG3. Interacts with RGS14. Interacts with RGS16. Interacts with RGS19. Interacts (when palmitoylated) with ADGRG3. Post-translationally, deamidation of Asn-346 converts alpha-1 to alpha-3. In terms of processing, histaminylated at Gln-205 residues by TGM2.

Its subcellular location is the cell membrane. The protein localises to the membrane. It catalyses the reaction GTP + H2O = GDP + phosphate + H(+). With respect to regulation, the GTPase activity is promoted by GTPAse activators, such as RGS14, RGS16 and RGS19. Functionally, guanine nucleotide-binding proteins (G proteins) function as transducers downstream of G protein-coupled receptors (GPCRs) in numerous signaling cascades. The alpha chain contains the guanine nucleotide binding site and alternates between an active, GTP-bound state and an inactive, GDP-bound state. Signaling by an activated GPCR promotes GDP release and GTP binding. The alpha subunit has a low GTPase activity that converts bound GTP to GDP, thereby terminating the signal. Both GDP release and GTP hydrolysis are modulated by numerous regulatory proteins. Signaling is mediated via effector proteins, such as adenylate cyclase. Inhibits adenylate cyclase activity, leading to decreased intracellular cAMP levels. This chain is Guanine nucleotide-binding protein G(o) subunit alpha (GNAO1), found in Cricetulus longicaudatus (Long-tailed dwarf hamster).